A 421-amino-acid polypeptide reads, in one-letter code: CinA-like protein (421 aa).

Belongs to the CinA family.

The chain is CinA-like protein from Synechococcus elongatus (strain ATCC 33912 / PCC 7942 / FACHB-805) (Anacystis nidulans R2).